Consider the following 179-residue polypeptide: MLSLDFLDDVRRMNKRQLYYQVLNFGMIVSSALMIWKGLMVITGSESPIVVVLSGSMEPAFHRGDLLFLTNRVEDPIRVGEIVVFRIEGREIPIVHRVLKIHEKQNGHIKFLTKGDNNAVDDRGLYKQGQHWLEKKDVVGRARGFVPYIGIVTILMNDYPKFKYAVLFLLGLFVLVHRE.

Residues 1-16 (MLSLDFLDDVRRMNKR) are Cytoplasmic-facing. A helical; Signal-anchor for type II membrane protein membrane pass occupies residues 17-36 (QLYYQVLNFGMIVSSALMIW). Residues 37-179 (KGLMVITGSE…LGLFVLVHRE (143 aa)) are Lumenal-facing. Residues serine 56, histidine 96, and aspartate 122 each act as charge relay system in the active site. The tract at residues 165–176 (AVLFLLGLFVLV) is C-terminal short (CTS) helix.

It belongs to the peptidase S26B family. As to quaternary structure, component of the signal peptidase complex paralog A (SPC-A) composed of a catalytic subunit SEC11A and three accessory subunits SPCS1, SPCS2 and SPCS3. Within the complex, interacts with SPCS2 and SPCS3. The complex induces a local thinning of the ER membrane which is used to measure the length of the signal peptide (SP) h-region of protein substrates. This ensures the selectivity of the complex towards h-regions shorter than 18-20 amino acids.

It localises to the endoplasmic reticulum membrane. The catalysed reaction is Cleavage of hydrophobic, N-terminal signal or leader sequences from secreted and periplasmic proteins.. Catalytic component of the signal peptidase complex (SPC) which catalyzes the cleavage of N-terminal signal sequences from nascent proteins as they are translocated into the lumen of the endoplasmic reticulum. Specifically cleaves N-terminal signal peptides that contain a hydrophobic alpha-helix (h-region) shorter than 18-20 amino acids. This chain is Signal peptidase complex catalytic subunit SEC11A (SEC11A), found in Bos taurus (Bovine).